We begin with the raw amino-acid sequence, 150 residues long: Large ribosomal subunit protein eL19 (150 aa).

A disordered region spans residues 55 to 89 (IKGQSRYRAKIRHEQKKKGRHRGPGSRKGKKTARM).

Belongs to the eukaryotic ribosomal protein eL19 family. Part of the 50S ribosomal subunit.

Functionally, binds to the 23S rRNA. The sequence is that of Large ribosomal subunit protein eL19 from Pyrococcus furiosus (strain ATCC 43587 / DSM 3638 / JCM 8422 / Vc1).